The chain runs to 610 residues: MARMSTNSTTPLSHIRNFSIVAHIDHGKSTLADRLIQTTGGLAEREMSEQVLDNMDIERERGITIKAQTVRLHYQANNGEKYILNLIDTPGHVDFAYEVSRSLSACEGSLLVVDASQGVEAQTLANVYQAIDNNHELVTVLNKIDLPAAEPDRIKEQIEEVIGIDASEAVLISAKTGLGIPDVLEAIVNRLPAPKSPGGDKAPLKALLVDSWYDTYLGVMVLVRIIDGVLTKGQTIRMMGTDAKYQVERVGVLTPKMVNVDSLGPGEIGFITASIKEVADTRVGDTITEDKRPTAQALPGFKPAQPVVFCGLFPVDAADFEDLRAAMGKLRLNDASFSFEMESSAALGFGFRCGFLGLLHLEIIQERLEREFDLDLIATAPSVVYKMFMTDGSERELHNPADMPDVVKISEIHEPWIRATILTPDDYLGGILKLCQDRRGIQIELTYVGTRAMLTYDLPLNEVVFDFYDRLKSISKGYASFDYTLTDHREGNLVKMSILVNGEPVDALSMMVHRTAAEKRGRDMCEKLKELIPKHMFKIPIQAAIGGNVIARETISALRKDVTAKCYGGDATRKRKLLDKQKAGKKRMRQFGKVEIPQEAFIAALKMGDE.

One can recognise a tr-type G domain in the interval 13–195 (SHIRNFSIVA…AIVNRLPAPK (183 aa)). GTP contacts are provided by residues 25-30 (DHGKST) and 142-145 (NKID).

The protein belongs to the TRAFAC class translation factor GTPase superfamily. Classic translation factor GTPase family. LepA subfamily.

It localises to the cell inner membrane. The catalysed reaction is GTP + H2O = GDP + phosphate + H(+). Functionally, required for accurate and efficient protein synthesis under certain stress conditions. May act as a fidelity factor of the translation reaction, by catalyzing a one-codon backward translocation of tRNAs on improperly translocated ribosomes. Back-translocation proceeds from a post-translocation (POST) complex to a pre-translocation (PRE) complex, thus giving elongation factor G a second chance to translocate the tRNAs correctly. Binds to ribosomes in a GTP-dependent manner. This is Elongation factor 4 from Rhizobium leguminosarum bv. trifolii (strain WSM2304).